The primary structure comprises 371 residues: Queuine tRNA-ribosyltransferase (371 aa).

D90 functions as the Proton acceptor in the catalytic mechanism. Substrate contacts are provided by residues 90–94, D144, Q185, and G212; that span reads DSGGF. Residues 243–249 form an RNA binding region; sequence GVGTPED. D262 serves as the catalytic Nucleophile. The segment at 267 to 271 is RNA binding; important for wobble base 34 recognition; it reads TRNAR. C300, C302, C305, and H331 together coordinate Zn(2+).

Belongs to the queuine tRNA-ribosyltransferase family. In terms of assembly, homodimer. Within each dimer, one monomer is responsible for RNA recognition and catalysis, while the other monomer binds to the replacement base PreQ1. Zn(2+) serves as cofactor.

It catalyses the reaction 7-aminomethyl-7-carbaguanine + guanosine(34) in tRNA = 7-aminomethyl-7-carbaguanosine(34) in tRNA + guanine. It participates in tRNA modification; tRNA-queuosine biosynthesis. Functionally, catalyzes the base-exchange of a guanine (G) residue with the queuine precursor 7-aminomethyl-7-deazaguanine (PreQ1) at position 34 (anticodon wobble position) in tRNAs with GU(N) anticodons (tRNA-Asp, -Asn, -His and -Tyr). Catalysis occurs through a double-displacement mechanism. The nucleophile active site attacks the C1' of nucleotide 34 to detach the guanine base from the RNA, forming a covalent enzyme-RNA intermediate. The proton acceptor active site deprotonates the incoming PreQ1, allowing a nucleophilic attack on the C1' of the ribose to form the product. After dissociation, two additional enzymatic reactions on the tRNA convert PreQ1 to queuine (Q), resulting in the hypermodified nucleoside queuosine (7-(((4,5-cis-dihydroxy-2-cyclopenten-1-yl)amino)methyl)-7-deazaguanosine). The protein is Queuine tRNA-ribosyltransferase of Acidithiobacillus ferrooxidans (strain ATCC 23270 / DSM 14882 / CIP 104768 / NCIMB 8455) (Ferrobacillus ferrooxidans (strain ATCC 23270)).